The sequence spans 177 residues: Ribosome maturation factor RimM (177 aa).

One can recognise a PRC barrel domain in the interval 98 to 177 (GEEFYWRELY…RIEVDWDPGF (80 aa)).

The protein belongs to the RimM family. As to quaternary structure, binds ribosomal protein uS19.

Its subcellular location is the cytoplasm. An accessory protein needed during the final step in the assembly of 30S ribosomal subunit, possibly for assembly of the head region. Essential for efficient processing of 16S rRNA. May be needed both before and after RbfA during the maturation of 16S rRNA. It has affinity for free ribosomal 30S subunits but not for 70S ribosomes. The polypeptide is Ribosome maturation factor RimM (Photobacterium profundum (strain SS9)).